A 1073-amino-acid chain; its full sequence is TSC22 domain family protein 1 (1073 aa).

Residues 1–98 (MHQPPESTAA…SQAQLQAQPL (98 aa)) form a required for interaction with TGFBR1 and promotion of TGF-beta signaling region. Disordered stretches follow at residues 22–110 (MAHP…KKSG), 125–205 (ISSN…PHLP), 220–288 (LHHH…SPAS), 458–486 (VTSE…SVGS), 607–628 (YSQA…QQLQ), and 742–766 (VQQP…QVVP). The segment covering 36-45 (GSASALNAAG) has biased composition (low complexity). Over residues 58 to 70 (FPPPSLLQPPPPA) the composition is skewed to pro residues. Positions 84-100 (SLNLLSQAQLQAQPLAP) are enriched in low complexity. Positions 133–142 (EDTESYDDLD) are enriched in acidic residues. Residues 220–240 (LHHHHQIHHGHHLQHGHHHPS) show a composition bias toward basic residues. Residues 257 to 271 (PVSRKLSTTGSSDSI) show a composition bias toward polar residues. A Phosphoserine modification is found at S263. Composition is skewed to low complexity over residues 272 to 288 (TPVA…SPAS) and 465 to 483 (TSGS…YTES). The span at 614–625 (VQTPLPGAPPPQ) shows a compositional bias: pro residues. Residues 742 to 764 (VQQPSTQVPPSVIQQGAPPSSQV) show a composition bias toward polar residues. Positions 1006–1027 (LKEQIKELIEKNSQLEQENNLL) are leucine-zipper. A disordered region spans residues 1037–1073 (AQFQAQLQTGSPPATTQPQGTTQPPAQPASQGSGPTA). Positions 1044-1073 (QTGSPPATTQPQGTTQPPAQPASQGSGPTA) are enriched in low complexity.

Belongs to the TSC-22/Dip/Bun family. Forms homodimers. Forms heterodimers. Component of a complex composed of TSC22D1 (via N-terminus), TGFBR1 and TGFBR2; the interaction between TSC22D1 and TGFBR1 is inhibited by SMAD7 and promoted by TGFB1. Interacts with SMAD7; the interaction requires TGF-beta and the interaction is inhibited by TGFBR1. Interacts with TPT1/fortilin; interaction results in the destabilization of TSC22D1 protein and prevents TSC22D1-mediated apoptosis. Interacts with SMAD4 (via N-terminus). Interacts with ACVRL1/ALK1, ACVR1/ALK2, BMPR1A/ALK3, ACVR1B/ALK4, BMPR1B/ALK6, ACVR2A/ACTRII, and BMPR2. Interacts with SMAD6. Interacts with TFE3; the interaction is enhanced in the presence of TGF-beta. As to quaternary structure, forms a heterodimer with TSC22D4/THG1. In terms of assembly, forms a heterodimer with TSC22D4/THG1. Interacts with histone H1-2. Interacts with GNL3. Interacts with histone H1-2. As to expression, ubiquitously expressed in adult tissues. Expressed in the postmitotic epithelial compartment at the top of intestinal mucosal villi.

Its subcellular location is the cytoplasm. The protein localises to the nucleus. It is found in the cell membrane. It localises to the mitochondrion. Transcriptional repressor. Acts on the C-type natriuretic peptide (CNP) promoter. Acts to promote CASP3-mediated apoptosis. Positively regulates TGF-beta signaling by interacting with SMAD7 which inhibits binding of SMAD7 to TGFBR1, preventing recruitment of SMURF ubiquitin ligases to TGFBR1 and inhibiting SMURF-mediated ubiquitination and degradation of TGFBR1. Contributes to enhancement of TGF-beta signaling by binding to and modulating the transcription activator activity of SMAD4. Promotes TGF-beta-induced transcription of COL1A2; via its interaction with TFE3 at E-boxes in the gene proximal promoter. Plays a role in the repression of hematopoietic precursor cell growth. Promotes IL2 deprivation-induced apoptosis in T-lymphocytes, via repression of TSC22D3/GILZ transcription and activation of the caspase cascade. Its function is as follows. May act to negatively regulate TGFB3 signaling and thereby inhibit cell death in mammary gland cells. In terms of biological role, positively regulates cell death in response to TGFB3 during mammary gland involution. This chain is TSC22 domain family protein 1, found in Homo sapiens (Human).